A 535-amino-acid polypeptide reads, in one-letter code: Succinate-semialdehyde dehydrogenase, mitochondrial (535 aa).

Residues Met1–Tyr47 constitute a mitochondrion transit peptide. The residue at position 126 (Lys126) is an N6-acetyllysine; alternate. Lys126 carries the post-translational modification N6-succinyllysine; alternate. 2 positions are modified to N6-succinyllysine: Lys135 and Lys184. Residue Thr202 to Trp204 participates in NAD(+) binding. Arg213 contacts substrate. Lys228 to Glu231 is an NAD(+) binding site. N6-acetyllysine; alternate is present on Lys265. Lys265 carries the post-translational modification N6-succinyllysine; alternate. NAD(+) is bound by residues Gly284 to Gly289 and Glu306. The active-site Proton acceptor is Glu306. Residue Arg334 coordinates substrate. Cys340 functions as the Nucleophile in the catalytic mechanism. The cysteines at positions 340 and 342 are disulfide-linked. Lys365 carries the post-translational modification N6-acetyllysine. Lys402 carries the post-translational modification N6-succinyllysine. Lys411 is modified (N6-acetyllysine). Glu438–Phe440 contributes to the NAD(+) binding site. Position 498 (Ser498) interacts with substrate. Ser499 carries the post-translational modification Phosphoserine.

This sequence belongs to the aldehyde dehydrogenase family. As to quaternary structure, homotetramer. In terms of tissue distribution, brain, pancreas, heart, liver, skeletal muscle and kidney. Lower in placenta.

The protein localises to the mitochondrion. The enzyme catalyses succinate semialdehyde + NAD(+) + H2O = succinate + NADH + 2 H(+). The protein operates within amino-acid degradation; 4-aminobutanoate degradation. Its activity is regulated as follows. Redox-regulated. Inhibited under oxydizing conditions. Inhibited by hydrogen peroxide H(2)O(2). Functionally, catalyzes one step in the degradation of the inhibitory neurotransmitter gamma-aminobutyric acid (GABA). This Homo sapiens (Human) protein is Succinate-semialdehyde dehydrogenase, mitochondrial.